A 219-amino-acid chain; its full sequence is 3-dehydroquinate dehydratase (219 aa).

Residues 28–30 (ELR) and Arg61 each bind 3-dehydroquinate. The active-site Proton donor/acceptor is the His116. Lys142 serves as the catalytic Schiff-base intermediate with substrate. 3-dehydroquinate-binding residues include Arg180 and Gln203.

It belongs to the type-I 3-dehydroquinase family. In terms of assembly, homodimer.

The catalysed reaction is 3-dehydroquinate = 3-dehydroshikimate + H2O. It participates in metabolic intermediate biosynthesis; chorismate biosynthesis; chorismate from D-erythrose 4-phosphate and phosphoenolpyruvate: step 3/7. Functionally, involved in the third step of the chorismate pathway, which leads to the biosynthesis of aromatic amino acids. Catalyzes the cis-dehydration of 3-dehydroquinate (DHQ) and introduces the first double bond of the aromatic ring to yield 3-dehydroshikimate. This Aquifex aeolicus (strain VF5) protein is 3-dehydroquinate dehydratase.